Here is a 24-residue protein sequence, read N- to C-terminus: Osteocalcin (24 aa).

The 24-residue stretch at 1-24 folds into the Gla domain; that stretch reads REVCELNPDCDELADHIGFQEAYR. Positions 2, 5, and 11 each coordinate Ca(2+). Glu-2 and Glu-5 each carry 4-carboxyglutamate. An intrachain disulfide couples Cys-4 to Cys-10.

Belongs to the osteocalcin/matrix Gla protein family. Gamma-carboxyglutamate residues are formed by vitamin K dependent carboxylation by GGCX. These residues are essential for the binding of calcium. Decarboxylation promotes the hormone activity.

The protein resides in the secreted. The carboxylated form is one of the main organic components of the bone matrix, which constitutes 1-2% of the total bone protein: it acts as a negative regulator of bone formation and is required to limit bone formation without impairing bone resorption or mineralization. The carboxylated form binds strongly to apatite and calcium. Its function is as follows. The uncarboxylated form acts as a hormone secreted by osteoblasts, which regulates different cellular processes, such as energy metabolism, male fertility and brain development. Regulates of energy metabolism by acting as a hormone favoring pancreatic beta-cell proliferation, insulin secretion and sensitivity and energy expenditure. Uncarboxylated osteocalcin hormone also promotes testosterone production in the testes: acts as a ligand for G protein-coupled receptor GPRC6A at the surface of Leydig cells, initiating a signaling response that promotes the expression of enzymes required for testosterone synthesis in a CREB-dependent manner. Also acts as a regulator of brain development: osteocalcin hormone crosses the blood-brain barrier and acts as a ligand for GPR158 on neurons, initiating a signaling response that prevents neuronal apoptosis in the hippocampus, favors the synthesis of all monoamine neurotransmitters and inhibits that of gamma-aminobutyric acid (GABA). Osteocalcin also crosses the placenta during pregnancy and maternal osteocalcin is required for fetal brain development. The sequence is that of Osteocalcin from Homo sapiens neanderthalensis (Neanderthal).